A 365-amino-acid chain; its full sequence is Outer capsid protein sigma-3 (365 aa).

Residues 51–73 form a CCHC-type zinc finger; the sequence is CMHCLGVVGSLQRKLKHLPHHRC.

It belongs to the orthoreovirus sigma-3 protein family. As to quaternary structure, heterohexamer of three sigma-3 and three Mu-1 proteins. The RNA-binding form is probably a homodimer. Cleaved during virus the endosomal proteolytic disassembly of the outer capsid.

It is found in the virion. The protein resides in the host cytoplasm. It localises to the host nucleus. Functionally, stimulates translation by blocking the activation of the dsRNA-dependent protein kinase EIF2AK2/PKR, thereby inhibiting the host interferon response. Sigma3 prevents the activation of EIF2AK2 by competing with the kinase for dsRNA-binding. The viral outer shell polypeptides, of which sigma-3 is one, impose structural constraints that prevent elongation of nascent transcripts by the RNA-dependent RNA polymerase lambda-3. The chain is Outer capsid protein sigma-3 (S4) from Reovirus type 3 (strain Dearing) (T3D).